Consider the following 228-residue polypeptide: Aspartyl protease inhibitor (228 aa).

A signal peptide spans 1-15 (MKLIELCVLCAIAFA). Over residues 88–112 (KLKSRMSGKKEEKAAVTSTKDEDLP) the composition is skewed to basic and acidic residues. Residues 88 to 119 (KLKSRMSGKKEEKAAVTSTKDEDLPKPPQKPS) form a disordered region. Cys-134 and Cys-224 are disulfide-bonded.

This sequence belongs to the protease inhibitor I33 family.

The protein localises to the secreted. Aspartyl protease inhibitor. The polypeptide is Aspartyl protease inhibitor (Trichostrongylus colubriformis (Black scour worm)).